A 431-amino-acid chain; its full sequence is Enolase (431 aa).

Q163 provides a ligand contact to (2R)-2-phosphoglycerate. Catalysis depends on E205, which acts as the Proton donor. The Mg(2+) site is built by D242, E283, and D310. Residues K335, R364, S365, and K386 each coordinate (2R)-2-phosphoglycerate. The active-site Proton acceptor is the K335.

It belongs to the enolase family. It depends on Mg(2+) as a cofactor.

The protein localises to the cytoplasm. It localises to the secreted. It is found in the cell surface. The enzyme catalyses (2R)-2-phosphoglycerate = phosphoenolpyruvate + H2O. It participates in carbohydrate degradation; glycolysis; pyruvate from D-glyceraldehyde 3-phosphate: step 4/5. Catalyzes the reversible conversion of 2-phosphoglycerate (2-PG) into phosphoenolpyruvate (PEP). It is essential for the degradation of carbohydrates via glycolysis. The polypeptide is Enolase (Kineococcus radiotolerans (strain ATCC BAA-149 / DSM 14245 / SRS30216)).